The following is a 319-amino-acid chain: Beta-ketoacyl-[acyl-carrier-protein] synthase III (319 aa).

Active-site residues include cysteine 113 and histidine 246. Residues 247 to 251 (QANLR) are ACP-binding. The active site involves asparagine 276.

Belongs to the thiolase-like superfamily. FabH family. Homodimer.

It localises to the cytoplasm. The catalysed reaction is malonyl-[ACP] + acetyl-CoA + H(+) = 3-oxobutanoyl-[ACP] + CO2 + CoA. It participates in lipid metabolism; fatty acid biosynthesis. Catalyzes the condensation reaction of fatty acid synthesis by the addition to an acyl acceptor of two carbons from malonyl-ACP. Catalyzes the first condensation reaction which initiates fatty acid synthesis and may therefore play a role in governing the total rate of fatty acid production. Possesses both acetoacetyl-ACP synthase and acetyl transacylase activities. Its substrate specificity determines the biosynthesis of branched-chain and/or straight-chain of fatty acids. This chain is Beta-ketoacyl-[acyl-carrier-protein] synthase III, found in Chromobacterium violaceum (strain ATCC 12472 / DSM 30191 / JCM 1249 / CCUG 213 / NBRC 12614 / NCIMB 9131 / NCTC 9757 / MK).